The sequence spans 244 residues: 14-3-3 protein beta/alpha-B (244 aa).

Residue methionine 1 is modified to N-acetylmethionine.

It belongs to the 14-3-3 family. In terms of assembly, homodimer, and heterodimer with other family members.

The protein localises to the cytoplasm. Functionally, adapter protein implicated in the regulation of a large spectrum of both general and specialized signaling pathways. Binds to a large number of partners, usually by recognition of a phosphoserine or phosphothreonine motif. Binding generally results in the modulation of the activity of the binding partner. The chain is 14-3-3 protein beta/alpha-B (ywhab-b) from Xenopus laevis (African clawed frog).